Here is a 95-residue protein sequence, read N- to C-terminus: MDMKAMLKQAQKMQADLEKKQSELAKKEFNISKQGVEIVINGAKEITKLVIHPALIDEDDKETLEDLLILAFNEAISLISEEEAKIAPKANSLGF.

It belongs to the YbaB/EbfC family. Homodimer.

Its subcellular location is the cytoplasm. It is found in the nucleoid. In terms of biological role, binds to DNA and alters its conformation. May be involved in regulation of gene expression, nucleoid organization and DNA protection. This chain is Nucleoid-associated protein MMOB0740, found in Mycoplasma mobile (strain ATCC 43663 / 163K / NCTC 11711) (Mesomycoplasma mobile).